The primary structure comprises 567 residues: Potassium-transporting ATPase potassium-binding subunit (567 aa).

The next 11 helical transmembrane spans lie at 5–25 (GWIQILVFCGIIILLVKPLGG), 64–84 (TTYAASLLLFNLAGFLLLYML), 136–156 (GLTVQNFVSAATGVAIAIALI), 179–199 (LYVLLPLCIILTLAFVSLGVP), 254–274 (ISNMIQMVAIFAIGASLTNVF), 285–305 (WAIFAAMGILFVAGVAICYWA), 332–352 (IAMSALFAVVTTAASCGAVIA), 359–376 (ALGGMIPMINMMLGEIII), 421–441 (MLAVLCLPLSILGFTAIASVI), 486–506 (ITIGLAMLMGRFLVILPAMAI), and 529–549 (LFVGLLIGVILVVGGLIFFPA).

Belongs to the KdpA family. In terms of assembly, the system is composed of three essential subunits: KdpA, KdpB and KdpC.

It localises to the cell inner membrane. Functionally, part of the high-affinity ATP-driven potassium transport (or Kdp) system, which catalyzes the hydrolysis of ATP coupled with the electrogenic transport of potassium into the cytoplasm. This subunit binds the periplasmic potassium ions and delivers the ions to the membrane domain of KdpB through an intramembrane tunnel. This is Potassium-transporting ATPase potassium-binding subunit from Brucella anthropi (strain ATCC 49188 / DSM 6882 / CCUG 24695 / JCM 21032 / LMG 3331 / NBRC 15819 / NCTC 12168 / Alc 37) (Ochrobactrum anthropi).